The sequence spans 269 residues: Formamidopyrimidine-DNA glycosylase (269 aa).

Residue proline 2 is the Schiff-base intermediate with DNA of the active site. The Proton donor role is filled by glutamate 3. The active-site Proton donor; for beta-elimination activity is the lysine 57. DNA is bound by residues histidine 90, arginine 109, and lysine 150. The segment at 235-269 (QVYGRKGEPCRVCGTPIVATKHAQRATFYCRQCQK) adopts an FPG-type zinc-finger fold. Arginine 259 acts as the Proton donor; for delta-elimination activity in catalysis.

This sequence belongs to the FPG family. In terms of assembly, monomer. Zn(2+) is required as a cofactor.

It catalyses the reaction Hydrolysis of DNA containing ring-opened 7-methylguanine residues, releasing 2,6-diamino-4-hydroxy-5-(N-methyl)formamidopyrimidine.. The catalysed reaction is 2'-deoxyribonucleotide-(2'-deoxyribose 5'-phosphate)-2'-deoxyribonucleotide-DNA = a 3'-end 2'-deoxyribonucleotide-(2,3-dehydro-2,3-deoxyribose 5'-phosphate)-DNA + a 5'-end 5'-phospho-2'-deoxyribonucleoside-DNA + H(+). Functionally, involved in base excision repair of DNA damaged by oxidation or by mutagenic agents. Acts as a DNA glycosylase that recognizes and removes damaged bases. Has a preference for oxidized purines, such as 7,8-dihydro-8-oxoguanine (8-oxoG). Has AP (apurinic/apyrimidinic) lyase activity and introduces nicks in the DNA strand. Cleaves the DNA backbone by beta-delta elimination to generate a single-strand break at the site of the removed base with both 3'- and 5'-phosphates. In Escherichia coli O6:K15:H31 (strain 536 / UPEC), this protein is Formamidopyrimidine-DNA glycosylase.